The primary structure comprises 284 residues: Shikimate dehydrogenase (NADP(+)) (284 aa).

Shikimate-binding positions include 20–22 and serine 67; that span reads SIS. Catalysis depends on lysine 71, which acts as the Proton acceptor. Asparagine 92 and aspartate 107 together coordinate shikimate. Residues 129–133 and valine 227 contribute to the NADP(+) site; that span reads GAGGA. Residue tyrosine 229 coordinates shikimate. Glycine 250 is an NADP(+) binding site.

Belongs to the shikimate dehydrogenase family. As to quaternary structure, homodimer.

The enzyme catalyses shikimate + NADP(+) = 3-dehydroshikimate + NADPH + H(+). It participates in metabolic intermediate biosynthesis; chorismate biosynthesis; chorismate from D-erythrose 4-phosphate and phosphoenolpyruvate: step 4/7. Involved in the biosynthesis of the chorismate, which leads to the biosynthesis of aromatic amino acids. Catalyzes the reversible NADPH linked reduction of 3-dehydroshikimate (DHSA) to yield shikimate (SA). The protein is Shikimate dehydrogenase (NADP(+)) of Streptococcus sanguinis (strain SK36).